The primary structure comprises 305 residues: Taste receptor type 2 member 13 (305 aa).

The Extracellular portion of the chain corresponds to 1–7 (MGSSLYD). A helical transmembrane segment spans residues 8–28 (ILTIVMIAEFIFGNVTNGFIV). Residues 29 to 42 (LTNCIAWLSKRTLS) are Cytoplasmic-facing. Residues 43–63 (FIGWIQLFLAISRVVLIWEML) traverse the membrane as a helical segment. Over 64 to 88 (LAWLKYMKYSFSYLAGTELRVMMLT) the chain is Extracellular. The chain crosses the membrane as a helical span at residues 89–109 (WVVSNHFSLWLATILSIFYLL). Topologically, residues 110–128 (KIASFSRPVFLYLKWRVKK) are cytoplasmic. A helical transmembrane segment spans residues 129–149 (VLLLILLGNLIFLMFNILQIN). The Extracellular segment spans residues 150–182 (THIEDWMDQYKRNITWDSRVNEFVGFSNLVLLE). An N-linked (GlcNAc...) asparagine glycan is attached at Asn-162. Residues 183–203 (MIMFSVTPFTVALVSFILLIF) traverse the membrane as a helical segment. Over 204–232 (SLWKHLQKMHLSSRGERDPSTKAHVNALR) the chain is Cytoplasmic. The chain crosses the membrane as a helical span at residues 233–253 (IMVSFLLLYATYFISFFISLI). The Extracellular segment spans residues 254 to 262 (PMAHKKGLD). Residues 263–283 (LMFSLTVGLFYPSSHSFILIL) traverse the membrane as a helical segment. Over 284 to 305 (GHSNLRHSSCLVITYLRCKEKD) the chain is Cytoplasmic.

The protein belongs to the G-protein coupled receptor T2R family. As to expression, expressed in subsets of taste receptor cells of the tongue and palate epithelium and exclusively in gustducin-positive cells. Expressed in 15% taste bud cells in circumvallate and foliate papillae but only in 2% in fungiform papillae. Expressed in the duodenum, antrum and fundus (part of the stomach).

The protein localises to the membrane. In terms of biological role, receptor that may play a role in the perception of bitterness and is gustducin-linked. May play a role in sensing the chemical composition of the gastrointestinal content. The activity of this receptor may stimulate alpha gustducin, mediate PLC-beta-2 activation and lead to the gating of TRPM5. The polypeptide is Taste receptor type 2 member 13 (Tas2r13) (Rattus norvegicus (Rat)).